Reading from the N-terminus, the 294-residue chain is MTEKKHKNSLSLVHSIKEELKKDKLAMISTIFLVAVFLIVYIYSMFLKQSNYVDVNIMDQYLAPLTNGHLLGTDNGGRDIIMMLMISARNSFNIAFAVTLITLVVGNILGVITGYFGGRFDLIFMRFTDFVMILPSMMIIIVFVTIIPRFNSWSLIGIISIFSWIGTTRLIRARTMTEVNRDYVRASKTSGTSDFKIMFREIWPNLSTLVIAEATLVFAGNIGLETGLSFLGFGLPAGTPSLGTMINEATNPETMTDKPWTWVPATVVILIVVLAIIFIGNALRRVADQRQATR.

6 helical membrane passes run 27–47 (MISTIFLVAVFLIVYIYSMFL), 94–114 (IAFAVTLITLVVGNILGVITG), 127–147 (FTDFVMILPSMMIIIVFVTII), 151–171 (NSWSLIGIISIFSWIGTTRLI), 202–224 (IWPNLSTLVIAEATLVFAGNIGL), and 260–280 (WTWVPATVVILIVVLAIIFIG). The ABC transmembrane type-1 domain occupies 88–280 (ARNSFNIAFA…IVVLAIIFIG (193 aa)).

This sequence belongs to the binding-protein-dependent transport system permease family. OppBC subfamily. In terms of assembly, the complex is composed of two ATP-binding proteins (OppD and OppF), two transmembrane proteins (OppB and OppC) and a solute-binding protein (OppA).

The protein localises to the cell membrane. Its function is as follows. Part of the ABC transporter complex OppABCDF involved in the uptake of oligopeptides. Probably responsible for the translocation of the substrate across the membrane. Essential for uptake of peptides larger than three amino acids and for growth in milk. This Lactococcus lactis subsp. lactis (strain IL1403) (Streptococcus lactis) protein is Oligopeptide transport system permease protein OppC (oppC).